We begin with the raw amino-acid sequence, 206 residues long: Cytochrome c oxidase assembly protein CtaG (206 aa).

At 1–22 the chain is on the cytoplasmic side; it reads MTEQPTNRNDVPRRGLGRDATV. The chain crosses the membrane as a helical; Signal-anchor for type II membrane protein span at residues 23-43; the sequence is ASICGLVVALMVGASYAAVPF. Topologically, residues 44–206 are periplasmic; that stretch reads YNWFCRATGF…GEPDSRKGAL (163 aa).

The protein belongs to the COX11/CtaG family.

The protein localises to the cell inner membrane. In terms of biological role, exerts its effect at some terminal stage of cytochrome c oxidase synthesis, probably by being involved in the insertion of the copper B into subunit I. This chain is Cytochrome c oxidase assembly protein CtaG, found in Rhodopseudomonas palustris (strain BisB18).